A 415-amino-acid polypeptide reads, in one-letter code: Gamma-glutamyl phosphate reductase (415 aa).

It belongs to the gamma-glutamyl phosphate reductase family.

It localises to the cytoplasm. The enzyme catalyses L-glutamate 5-semialdehyde + phosphate + NADP(+) = L-glutamyl 5-phosphate + NADPH + H(+). It participates in amino-acid biosynthesis; L-proline biosynthesis; L-glutamate 5-semialdehyde from L-glutamate: step 2/2. Its function is as follows. Catalyzes the NADPH-dependent reduction of L-glutamate 5-phosphate into L-glutamate 5-semialdehyde and phosphate. The product spontaneously undergoes cyclization to form 1-pyrroline-5-carboxylate. This Thermotoga petrophila (strain ATCC BAA-488 / DSM 13995 / JCM 10881 / RKU-1) protein is Gamma-glutamyl phosphate reductase.